Here is a 194-residue protein sequence, read N- to C-terminus: Fibroblast growth factor 7 (194 aa).

An N-terminal signal peptide occupies residues 1 to 31 (MHKWILTWILPTLLYRSCFHIICLVGTISLA). The N-linked (GlcNAc...) asparagine glycan is linked to asparagine 45.

This sequence belongs to the heparin-binding growth factors family. Interacts with FGFBP1. Interacts with FGFR2. Affinity between fibroblast growth factors (FGFs) and their receptors is increased by heparan sulfate glycosaminoglycans that function as coreceptors. In terms of tissue distribution, epithelial cell.

Its subcellular location is the secreted. In terms of biological role, plays an important role in the regulation of embryonic development, cell proliferation and cell differentiation. Required for normal branching morphogenesis. Growth factor active on keratinocytes. Possible major paracrine effector of normal epithelial cell proliferation. This Homo sapiens (Human) protein is Fibroblast growth factor 7 (FGF7).